The primary structure comprises 361 residues: Phenylalanine--tRNA ligase alpha subunit (361 aa).

Glu260 is a binding site for Mg(2+).

It belongs to the class-II aminoacyl-tRNA synthetase family. Phe-tRNA synthetase alpha subunit type 1 subfamily. Tetramer of two alpha and two beta subunits. Requires Mg(2+) as cofactor.

It is found in the cytoplasm. It catalyses the reaction tRNA(Phe) + L-phenylalanine + ATP = L-phenylalanyl-tRNA(Phe) + AMP + diphosphate + H(+). This chain is Phenylalanine--tRNA ligase alpha subunit, found in Allorhizobium ampelinum (strain ATCC BAA-846 / DSM 112012 / S4) (Agrobacterium vitis (strain S4)).